The primary structure comprises 322 residues: Alanine dehydrogenase (322 aa).

The active-site Proton donor/acceptor is the Lys65. NAD(+) is bound by residues Arg108, 135 to 136 (TQ), 157 to 159 (DVR), 217 to 219 (GAD), Lys223, and Ser290.

This sequence belongs to the ornithine cyclodeaminase/mu-crystallin family. Archaeal alanine dehydrogenase subfamily. In terms of assembly, homodimer.

It catalyses the reaction L-alanine + NAD(+) + H2O = pyruvate + NH4(+) + NADH + H(+). Functionally, catalyzes the NAD(+)-dependent oxidative deamination of L-alanine to pyruvate, and the reverse reaction, the reductive amination of pyruvate. Its physiological role is not known. Cannot use NADP(+) instead of NAD(+) as a cosubstrate. In the deamination direction, can also efficiently use L-2-aminobutyrate as substrate. In the reductive amination direction, also exhibits high activity with 2-oxobutyrate and oxaloacetate as substrate. In contrast to bacterial homologs, does not exhibit any ornithine cyclodeaminase activity. This chain is Alanine dehydrogenase, found in Archaeoglobus fulgidus (strain ATCC 49558 / DSM 4304 / JCM 9628 / NBRC 100126 / VC-16).